The primary structure comprises 577 residues: Double-stranded RNA-binding protein Staufen homolog 1 (577 aa).

The residue at position 2 (Ser2) is an N-acetylserine. Over residues 34 to 44 (SIPSTTSSLPS) the composition is skewed to polar residues. The tract at residues 34–55 (SIPSTTSSLPSENAGRPIQNSA) is disordered. One can recognise a DRBM 1 domain in the interval 72-162 (TPTVELNALC…AAKALRILQN (91 aa)). An Asymmetric dimethylarginine modification is found at Arg108. Arg115 is subject to Asymmetric dimethylarginine; alternate. Arg115 is modified (omega-N-methylarginine; alternate). The residue at position 176 (Ser176) is a Phosphoserine. In terms of domain architecture, DRBM 2 spans 184–251 (SEISQVFEIA…AIAVLEELKK (68 aa)). A Phosphoserine modification is found at Ser278. Residues 286 to 354 (NPISRLAQIQ…AENMLEILGF (69 aa)) form the DRBM 3 domain. Positions 360-397 (QPTKPALKSEEKTPIKKPGDGRKVTFFEPGSGDENGTS) are disordered. The segment covering 366–384 (LKSEEKTPIKKPGDGRKVT) has biased composition (basic and acidic residues). Ser390 carries the post-translational modification Phosphoserine.

As to quaternary structure, binds tubulin. Binds with low affinity single-stranded RNA or DNA homopolymers. Interacts with CASC3 in an RNA-dependent manner. Identified in a mRNP complex, at least composed of DHX9, DDX3X, ELAVL1, HNRNPU, IGF2BP1, ILF3, PABPC1, PCBP2, PTBP2, STAU1, STAU2, SYNCRIP and YBX1. (Microbial infection) Interacts with HERV-K rec and gag proteins. In terms of assembly, (Microbial infection) Interacts with HIV-1 GAG polyprotein. As to quaternary structure, (Microbial infection) Interacts with influenza virus NS1 protein. (Microbial infection) Interacts with Ebola virus NP, VP30 and VP35. Widely expressed. Expressed in brain, pancreas, heart, skeletal muscles, liver, lung, kidney and placenta.

The protein resides in the cytoplasm. It localises to the rough endoplasmic reticulum. Its function is as follows. Binds double-stranded RNA (regardless of the sequence) and tubulin. May play a role in specific positioning of mRNAs at given sites in the cell by cross-linking cytoskeletal and RNA components, and in stimulating their translation at the site. Functionally, (Microbial infection) Plays a role in virus particles production of many viruses including of HIV-1, HERV-K, ebola virus and influenza virus. Acts by interacting with various viral proteins involved in particle budding process. The polypeptide is Double-stranded RNA-binding protein Staufen homolog 1 (STAU1) (Homo sapiens (Human)).